The chain runs to 765 residues: 5-methyltetrahydropteroyltriglutamate--homocysteine methyltransferase (765 aa).

Residues 18-21 (REWK) and lysine 114 each bind 5-methyltetrahydropteroyltri-L-glutamate. L-homocysteine is bound by residues 437-439 (IGS) and glutamate 490. Residues 437–439 (IGS) and glutamate 490 each bind L-methionine. Tryptophan 567 is a binding site for 5-methyltetrahydropteroyltri-L-glutamate. Aspartate 605 lines the L-homocysteine pocket. Aspartate 605 lines the L-methionine pocket. Residue glutamate 611 coordinates 5-methyltetrahydropteroyltri-L-glutamate. Zn(2+)-binding residues include histidine 647, cysteine 649, and glutamate 671. Catalysis depends on histidine 700, which acts as the Proton donor. Cysteine 732 lines the Zn(2+) pocket.

This sequence belongs to the vitamin-B12 independent methionine synthase family. It depends on Zn(2+) as a cofactor.

The catalysed reaction is 5-methyltetrahydropteroyltri-L-glutamate + L-homocysteine = tetrahydropteroyltri-L-glutamate + L-methionine. Its pathway is amino-acid biosynthesis; L-methionine biosynthesis via de novo pathway; L-methionine from L-homocysteine (MetE route): step 1/1. In terms of biological role, catalyzes the transfer of a methyl group from 5-methyltetrahydrofolate to homocysteine resulting in methionine formation. This is 5-methyltetrahydropteroyltriglutamate--homocysteine methyltransferase from Listeria welshimeri serovar 6b (strain ATCC 35897 / DSM 20650 / CCUG 15529 / CIP 8149 / NCTC 11857 / SLCC 5334 / V8).